Reading from the N-terminus, the 572-residue chain is Proteinaceous RNase P 1, chloroplastic/mitochondrial (572 aa).

Residues 1-70 (MLRLTCFTPS…SRHLCTLPLA (70 aa)) constitute a chloroplast and mitochondrion transit peptide. PPR repeat units follow at residues 96–130 (PEALLKQKLDMCSKKGDVLEALRLYDEARRNGVQL), 136–174 (NVLLYVCSLAEAATESSPNPGLSRGFDIFKQMIVDKVVP), 175–209 (NEATFTNGARLAVAKDDPEMAFDMVKQMKAFGIQP), and 210–244 (RLRSYGPALFGFCRKGDADKAYEVDAHMVESEVVP). In terms of domain architecture, PRORP spans 338-565 (MDENGVCKCC…DLQTSRQWLC (228 aa)). 2 residues coordinate Zn(2+): Cys-344 and Cys-347. Residues Asp-399, Asp-474, Asp-475, and Asp-493 each coordinate Mn(2+). 2 residues coordinate Zn(2+): His-548 and Cys-565.

This sequence belongs to the PPR family. P subfamily. It depends on Mg(2+) as a cofactor. Mn(2+) is required as a cofactor.

The protein resides in the mitochondrion. Its subcellular location is the plastid. It localises to the chloroplast. The catalysed reaction is Endonucleolytic cleavage of RNA, removing 5'-extranucleotides from tRNA precursor.. In terms of biological role, endonuclease RNase P responsible for the 5' maturation of tRNA precursors. Preferentially cleaves at the unusual cleavage site, but also able to cleave at the classical cleavage site. Also involved in the maturation of mRNAs in mitochondria. This chain is Proteinaceous RNase P 1, chloroplastic/mitochondrial (PRORP1), found in Arabidopsis thaliana (Mouse-ear cress).